We begin with the raw amino-acid sequence, 301 residues long: Probable 5-dehydro-4-deoxyglucarate dehydratase (301 aa).

This sequence belongs to the DapA family.

It carries out the reaction 5-dehydro-4-deoxy-D-glucarate + H(+) = 2,5-dioxopentanoate + CO2 + H2O. Its pathway is carbohydrate acid metabolism; D-glucarate degradation; 2,5-dioxopentanoate from D-glucarate: step 2/2. This is Probable 5-dehydro-4-deoxyglucarate dehydratase from Cereibacter sphaeroides (strain ATCC 17029 / ATH 2.4.9) (Rhodobacter sphaeroides).